We begin with the raw amino-acid sequence, 152 residues long: UPF0178 protein YaiI (152 aa).

The protein belongs to the UPF0178 family.

The protein is UPF0178 protein YaiI of Escherichia coli O81 (strain ED1a).